A 218-amino-acid polypeptide reads, in one-letter code: MPMTLGYWNIRGLAHSIRLLLEYTGSSYEEKKYTMGDAPDYDRSQWLNEKFKLGLDFPNLPYLIDGTHKITQSNAILRYIARKHNLCGETEKEKIREDILENQLMDNRMQLARLCYDPDFEKLKPEYLEGLPEMLKLYSQFLGKQPWFLGDKITFVDFIAYDVLERNQVFEPSCLDAFPNLKDFISRFEGLEKISAYMKSSRFLPRPVFTKMAVWGNK.

Residues 2–88 (PMTLGYWNIR…YIARKHNLCG (87 aa)) form the GST N-terminal domain. Residue 7–8 (YW) coordinates glutathione. 2 positions are modified to phosphoserine: S27 and S44. Glutathione contacts are provided by residues 43–46 (RSQW), K50, 59–60 (NL), and 72–73 (QS). Residues 90–208 (TEKEKIREDI…KSSRFLPRPV (119 aa)) form the GST C-terminal domain. Y116 provides a ligand contact to substrate.

The protein belongs to the GST superfamily. Mu family. As to quaternary structure, homodimer.

It is found in the cytoplasm. It catalyses the reaction RX + glutathione = an S-substituted glutathione + a halide anion + H(+). The enzyme catalyses 11(S)-hydroxy-14(S),15(S)-epoxy-(5Z,8Z,12E)-eicosatrienoate + glutathione = (11S,15S)-dihydroxy-14(R)-S-glutathionyl-(5Z,8Z,12E)-eicosatrienoate. Functionally, conjugation of reduced glutathione to a wide number of exogenous and endogenous hydrophobic electrophiles. Participates in the formation of novel hepoxilin regioisomers. Has activity toward aflatoxin B(1)-8,9-epoxide (AFBO). The polypeptide is Glutathione S-transferase Mu 2 (GSTM2) (Macaca fascicularis (Crab-eating macaque)).